We begin with the raw amino-acid sequence, 376 residues long: MSVRRVVVLGITGSIGAAALKLLRRFPDRFLLVGASGHRQTEYARALAREFSLSDITMTGSCSEQEGRARIKRLLSSCEAEVVVNGIAGAAGLFASLEVLKTRCTLALANKESVVLAASLLHAAARESGATIVPVDSEHAAIFQLIAAHGAHAVAQVVLTASGGPFRTFSKECLAHVTVEDALQHPTWRMGKKISVDSATLANKALEVIEAVQFFRIPVDRVTVVVHPQSIVHALVQCHSGETYAQLSVPDMASPLLYALLYPDAPPAYQTPLDFTSGLSLHFEPPRVDDFPLLRMGFDVARAQRAYPIAFNAANEEAVRAFLQRNIGFLDIAHVTAQALQEDWRAIPQTFEEVMACDTRARMCARTCIAQRWRER.

Thr12, Gly13, Ser14, Ile15, Arg39, Gln40, and Asn110 together coordinate NADPH. Residue Lys111 coordinates 1-deoxy-D-xylulose 5-phosphate. Glu112 contacts NADPH. Asp136 contributes to the Mn(2+) binding site. Residues Ser137, Glu138, Ser162, and His185 each coordinate 1-deoxy-D-xylulose 5-phosphate. A Mn(2+)-binding site is contributed by Glu138. Gly191 provides a ligand contact to NADPH. 1-deoxy-D-xylulose 5-phosphate contacts are provided by Ser198, Asn203, Lys204, and Glu207. Mn(2+) is bound at residue Glu207.

It belongs to the DXR family. It depends on Mg(2+) as a cofactor. Requires Mn(2+) as cofactor.

It catalyses the reaction 2-C-methyl-D-erythritol 4-phosphate + NADP(+) = 1-deoxy-D-xylulose 5-phosphate + NADPH + H(+). The protein operates within isoprenoid biosynthesis; isopentenyl diphosphate biosynthesis via DXP pathway; isopentenyl diphosphate from 1-deoxy-D-xylulose 5-phosphate: step 1/6. In terms of biological role, catalyzes the NADPH-dependent rearrangement and reduction of 1-deoxy-D-xylulose-5-phosphate (DXP) to 2-C-methyl-D-erythritol 4-phosphate (MEP). The polypeptide is 1-deoxy-D-xylulose 5-phosphate reductoisomerase (Treponema pallidum (strain Nichols)).